The chain runs to 538 residues: Capsular polysaccharide biosynthesis protein RkpI (538 aa).

6 helical membrane-spanning segments follow: residues 16 to 36 (LHDYPIALTLGCYLLSCAVIF), 70 to 90 (VIALVFAGFFAISWRPLYAAA), 114 to 134 (LVFSDIALVADVFKYKTIFYA), 139 to 159 (IVFWIVAFLYVFGVSALYMYF), 170 to 190 (LFWVLVMVGIAAGPWGLLFYG), and 212 to 232 (NTVRFGTFASVVFHFIIWLGV).

The protein resides in the cell membrane. Its pathway is capsule biogenesis; capsule polysaccharide biosynthesis. In terms of biological role, involved in antigen K (capsular polysaccharide) biosynthesis. In Rhizobium meliloti (strain 1021) (Ensifer meliloti), this protein is Capsular polysaccharide biosynthesis protein RkpI (rkpI).